We begin with the raw amino-acid sequence, 408 residues long: S-adenosylmethionine synthase (408 aa).

Residue 142–147 (GEGSGD) participates in ATP binding.

The protein belongs to the AdoMet synthase 2 family. Mg(2+) serves as cofactor.

The catalysed reaction is L-methionine + ATP + H2O = S-adenosyl-L-methionine + phosphate + diphosphate. It participates in amino-acid biosynthesis; S-adenosyl-L-methionine biosynthesis; S-adenosyl-L-methionine from L-methionine: step 1/1. Its function is as follows. Catalyzes the formation of S-adenosylmethionine from methionine and ATP. The protein is S-adenosylmethionine synthase of Halobacterium salinarum (strain ATCC 29341 / DSM 671 / R1).